The chain runs to 177 residues: VQ motif-containing protein 11 (177 aa).

The VQ signature appears at Phe-25–Gly-34. Ser-43, Ser-99, Ser-115, Ser-142, and Ser-145 each carry phosphoserine. Residues Ser-115–Ala-133 show a composition bias toward basic and acidic residues. The segment at Ser-115 to Ser-177 is disordered. Low complexity predominate over residues Glu-148–Leu-159. At Ser-161 the chain carries Phosphoserine. Over residues Arg-168 to Ser-177 the composition is skewed to basic and acidic residues.

In terms of processing, phosphorylated on serine residues by MPK6.

Its subcellular location is the nucleus. May modulate WRKY transcription factor activities. The polypeptide is VQ motif-containing protein 11 (Arabidopsis thaliana (Mouse-ear cress)).